The sequence spans 628 residues: (+)-alpha pinene synthase 1, chloroplastic (628 aa).

A chloroplast-targeting transit peptide spans M1–T18. Residues D379, D383, and D531 each contribute to the Mg(2+) site. Positions D379–D383 match the DDXXD motif motif.

This sequence belongs to the terpene synthase family. Tpsd subfamily. The cofactor is Mg(2+). Mn(2+) is required as a cofactor.

Its subcellular location is the plastid. It localises to the chloroplast. The enzyme catalyses (2E)-geranyl diphosphate = (1R,5R)-alpha-pinene + diphosphate. It participates in terpene metabolism; oleoresin biosynthesis. Its pathway is secondary metabolite biosynthesis; terpenoid biosynthesis. Monoterpene synthase (TPS) involved in the biosynthesis of monoterpene natural products included in conifer oleoresin secretions and volatile emissions; these compounds contribute to biotic and abiotic stress defense against herbivores and pathogens. Catalyzes the conversion of (2E)-geranyl diphosphate (GPP) to (+)-alpha-pinene. The polypeptide is (+)-alpha pinene synthase 1, chloroplastic (Pinus banksiana (Jack pine)).